The sequence spans 542 residues: Chaperonin GroEL 1 (542 aa).

ATP contacts are provided by residues 30–33 (TLGP), Lys-51, 87–91 (DGTTT), Gly-415, 480–482 (NAA), and Asp-496.

This sequence belongs to the chaperonin (HSP60) family. In terms of assembly, forms a cylinder of 14 subunits composed of two heptameric rings stacked back-to-back. Interacts with the co-chaperonin GroES.

It localises to the cytoplasm. It carries out the reaction ATP + H2O + a folded polypeptide = ADP + phosphate + an unfolded polypeptide.. Its function is as follows. Together with its co-chaperonin GroES, plays an essential role in assisting protein folding. The GroEL-GroES system forms a nano-cage that allows encapsulation of the non-native substrate proteins and provides a physical environment optimized to promote and accelerate protein folding. The chain is Chaperonin GroEL 1 from Nitrobacter winogradskyi (strain ATCC 25391 / DSM 10237 / CIP 104748 / NCIMB 11846 / Nb-255).